The primary structure comprises 274 residues: Diaminopimelate epimerase (274 aa).

Asn11, Gln44, and Asn64 together coordinate substrate. Cys73 functions as the Proton donor in the catalytic mechanism. Residues Gly74–Asn75, Asn157, Asn190, and Glu208–Arg209 contribute to the substrate site. Cys217 functions as the Proton acceptor in the catalytic mechanism. Gly218–Ser219 is a substrate binding site.

The protein belongs to the diaminopimelate epimerase family. As to quaternary structure, homodimer.

It localises to the cytoplasm. It carries out the reaction (2S,6S)-2,6-diaminopimelate = meso-2,6-diaminopimelate. The protein operates within amino-acid biosynthesis; L-lysine biosynthesis via DAP pathway; DL-2,6-diaminopimelate from LL-2,6-diaminopimelate: step 1/1. Its function is as follows. Catalyzes the stereoinversion of LL-2,6-diaminopimelate (L,L-DAP) to meso-diaminopimelate (meso-DAP), a precursor of L-lysine and an essential component of the bacterial peptidoglycan. The protein is Diaminopimelate epimerase of Shigella flexneri serotype 5b (strain 8401).